A 955-amino-acid polypeptide reads, in one-letter code: UPF0182 protein PMT_0755 (955 aa).

9 consecutive transmembrane segments (helical) span residues 25 to 45 (LLLSIAAFCLLMRVQVEWLWF), 58 to 78 (WLWQLGGLLLALLVVATCQLW), 107 to 127 (LLGCFVVVVGDLVLLSRLAWL), 146 to 166 (IWALVIPLSCVFISICVMLGN), 178 to 198 (CFCFSISIARGWGLWALALAI), 214 to 234 (FGLGQFPALAFALVVLLAQLI), 264 to 284 (CNFLRPLIGIILLTLSALLWL), 313 to 333 (SLASLAILVFAFLVIPFTWIQ), and 340 to 360 (LIASIIGVGAILLEVLLAPFV).

The protein belongs to the UPF0182 family.

It is found in the cell membrane. The chain is UPF0182 protein PMT_0755 from Prochlorococcus marinus (strain MIT 9313).